We begin with the raw amino-acid sequence, 490 residues long: Katanin p60 ATPase-containing subunit A-like 1 (490 aa).

The residue at position 1 (Met1) is an N-acetylmethionine. The disordered stretch occupies residues 87-182; the sequence is SCQDEPVRDP…ASDGEIPKFD (96 aa). Basic and acidic residues predominate over residues 116–127; that stretch reads SNREVRPLRKDM. The span at 128–139 shows a compositional bias: low complexity; the sequence is AGVGARGPVGRA. A compositionally biased stretch (basic and acidic residues) spans 143 to 169; the sequence is SKSEKPSTSRDKDNRARGKDDKGRKNM. Ser174 bears the Phosphoserine mark. Position 248-255 (248-255) interacts with ATP; that stretch reads GPPGTGKT.

This sequence belongs to the AAA ATPase family. Katanin p60 subunit A1 subfamily. A-like 1 sub-subfamily. As to quaternary structure, interacts with KATNB1 and KATNBL1.

The protein resides in the cytoplasm. The protein localises to the cytoskeleton. It is found in the spindle pole. It localises to the spindle. The catalysed reaction is n ATP + n H2O + a microtubule = n ADP + n phosphate + (n+1) alpha/beta tubulin heterodimers.. Its function is as follows. Regulates microtubule dynamics in Sertoli cells, a process that is essential for spermiogenesis and male fertility. Severs microtubules in an ATP-dependent manner, promoting rapid reorganization of cellular microtubule arrays. Has microtubule-severing activity in vitro. The polypeptide is Katanin p60 ATPase-containing subunit A-like 1 (Otolemur garnettii (Small-eared galago)).